A 236-amino-acid polypeptide reads, in one-letter code: 2,3,4,5-tetrahydropyridine-2,6-dicarboxylate N-acetyltransferase (236 aa).

It belongs to the transferase hexapeptide repeat family. DapH subfamily.

The enzyme catalyses (S)-2,3,4,5-tetrahydrodipicolinate + acetyl-CoA + H2O = L-2-acetamido-6-oxoheptanedioate + CoA. It participates in amino-acid biosynthesis; L-lysine biosynthesis via DAP pathway; LL-2,6-diaminopimelate from (S)-tetrahydrodipicolinate (acetylase route): step 1/3. In terms of biological role, catalyzes the transfer of an acetyl group from acetyl-CoA to tetrahydrodipicolinate. The protein is 2,3,4,5-tetrahydropyridine-2,6-dicarboxylate N-acetyltransferase of Clostridium botulinum (strain Loch Maree / Type A3).